A 332-amino-acid polypeptide reads, in one-letter code: 6-phosphogluconolactonase (332 aa).

It belongs to the cycloisomerase 2 family.

It catalyses the reaction 6-phospho-D-glucono-1,5-lactone + H2O = 6-phospho-D-gluconate + H(+). Its pathway is carbohydrate degradation; pentose phosphate pathway; D-ribulose 5-phosphate from D-glucose 6-phosphate (oxidative stage): step 2/3. In terms of biological role, catalyzes the hydrolysis of 6-phosphogluconolactone to 6-phosphogluconate. The sequence is that of 6-phosphogluconolactonase from Pectobacterium atrosepticum (strain SCRI 1043 / ATCC BAA-672) (Erwinia carotovora subsp. atroseptica).